A 243-amino-acid chain; its full sequence is Sugar fermentation stimulation protein homolog (243 aa).

The protein belongs to the SfsA family.

The protein is Sugar fermentation stimulation protein homolog of Acaryochloris marina (strain MBIC 11017).